A 156-amino-acid polypeptide reads, in one-letter code: Small ribosomal subunit protein uS7 (156 aa).

It belongs to the universal ribosomal protein uS7 family. As to quaternary structure, part of the 30S ribosomal subunit. Contacts proteins S9 and S11.

One of the primary rRNA binding proteins, it binds directly to 16S rRNA where it nucleates assembly of the head domain of the 30S subunit. Is located at the subunit interface close to the decoding center, probably blocks exit of the E-site tRNA. In Shewanella baltica (strain OS223), this protein is Small ribosomal subunit protein uS7.